The sequence spans 306 residues: UDP-N-acetylenolpyruvoylglucosamine reductase (306 aa).

Residues 28–194 form the FAD-binding PCMH-type domain; sequence KIGNISKLFL…LKTELNLKKE (167 aa). The Proton donor role is filled by S223. Residue E295 is part of the active site.

It belongs to the MurB family. FAD serves as cofactor.

It localises to the cytoplasm. It catalyses the reaction UDP-N-acetyl-alpha-D-muramate + NADP(+) = UDP-N-acetyl-3-O-(1-carboxyvinyl)-alpha-D-glucosamine + NADPH + H(+). The protein operates within cell wall biogenesis; peptidoglycan biosynthesis. In terms of biological role, cell wall formation. The sequence is that of UDP-N-acetylenolpyruvoylglucosamine reductase from Borrelia garinii subsp. bavariensis (strain ATCC BAA-2496 / DSM 23469 / PBi) (Borreliella bavariensis).